A 288-amino-acid polypeptide reads, in one-letter code: 5,10-methylenetetrahydrofolate reductase (288 aa).

A51, H73, G106, D107, A118, Y140, H144, and K159 together coordinate FAD. Residue D107 coordinates (6S)-5-methyl-5,6,7,8-tetrahydrofolate. Q175 lines the (6S)-5-methyl-5,6,7,8-tetrahydrofolate pocket. Position 175 (Q175) interacts with NADH.

This sequence belongs to the methylenetetrahydrofolate reductase family. Requires FAD as cofactor.

The catalysed reaction is (6S)-5-methyl-5,6,7,8-tetrahydrofolate + NAD(+) = (6R)-5,10-methylene-5,6,7,8-tetrahydrofolate + NADH + H(+). The protein operates within one-carbon metabolism; tetrahydrofolate interconversion. It functions in the pathway amino-acid biosynthesis; L-methionine biosynthesis via de novo pathway. Functionally, catalyzes the NADH-dependent reduction of 5,10-methylenetetrahydrofolate to 5-methyltetrahydrofolate. Is required to provide the methyl group necessary for methionine synthetase to convert homocysteine to methionine; the methyl group is given by 5-methyltetrahydrofolate. Is required for Sphingobium SYK-6 to grow on vanillate or syringate as the sole source of carbon. The sequence is that of 5,10-methylenetetrahydrofolate reductase from Sphingobium sp. (strain NBRC 103272 / SYK-6).